The primary structure comprises 785 residues: E3 UFM1-protein ligase 1 homolog (785 aa).

The tract at residues 404–483 (GGNASNQLDD…GGGGSNKKSV (80 aa)) is disordered.

This sequence belongs to the UFL1 family.

Functionally, E3 UFM1-protein ligase that mediates ufmylation of target proteins. The sequence is that of E3 UFM1-protein ligase 1 homolog from Drosophila willistoni (Fruit fly).